Consider the following 423-residue polypeptide: GPI mannosyltransferase 2 (423 aa).

9 helical membrane passes run 7–27 (LTLI…ILSG), 102–122 (VILG…LVLY), 128–148 (IFNP…PTAT), 151–171 (APYT…LLSI), 191–211 (TGIF…AHIF), 228–248 (FLSA…TETV), 298–318 (LAMP…SHLV), 333–353 (PPPI…LLLF), and 400–420 (YWIG…AGHY).

It belongs to the PIGV family.

The protein localises to the endoplasmic reticulum membrane. It participates in glycolipid biosynthesis; glycosylphosphatidylinositol-anchor biosynthesis. In terms of biological role, mannosyltransferase involved in glycosylphosphatidylinositol-anchor biosynthesis. Transfers the second mannose to the glycosylphosphatidylinositol during GPI precursor assembly. The protein is GPI mannosyltransferase 2 (GPI18) of Cryptococcus neoformans var. neoformans serotype D (strain B-3501A) (Filobasidiella neoformans).